The chain runs to 61 residues: Large ribosomal subunit protein bL28 (61 aa).

This sequence belongs to the bacterial ribosomal protein bL28 family.

The chain is Large ribosomal subunit protein bL28 from Nocardioides sp. (strain ATCC BAA-499 / JS614).